Here is a 47-residue protein sequence, read N- to C-terminus: Large ribosomal subunit protein uL14c (47 aa).

It belongs to the universal ribosomal protein uL14 family. Part of the 50S ribosomal subunit.

It localises to the plastid. Its subcellular location is the chloroplast. Its function is as follows. Binds to 23S rRNA. The sequence is that of Large ribosomal subunit protein uL14c (rpl14) from Vigna unguiculata (Cowpea).